We begin with the raw amino-acid sequence, 583 residues long: Torsin-1A-interacting protein 1 (583 aa).

Topologically, residues 1 to 339 (MAGERWRAEG…DESSVKIKWW (339 aa)) are nuclear. A disordered region spans residues 23–208 (APIREGRRRL…PPLRSPRPDA (186 aa)). S60 carries the post-translational modification Phosphoserine. Basic and acidic residues-rich tracts occupy residues 70-101 (FEPRAAKERSPGERRTPPEKFRSDSAKEEVRE) and 115-132 (GPQEAEEMKTRRSTRLEQ). Residues S134, S142, S155, and S157 each carry the phosphoserine modification. The segment covering 166–188 (SSQPVTSQTVSKKTVRTPETSVM) has biased composition (polar residues). S189 carries the post-translational modification Phosphoserine. Residue T222 is modified to Phosphothreonine. 3 positions are modified to phosphoserine: S228, S231, and S242. Residue K309 forms a Glycyl lysine isopeptide (Lys-Gly) (interchain with G-Cter in SUMO2) linkage. Residue S316 is modified to Phosphoserine. Residues 340-360 (LLILVAALAMGIYWFFHTPVV) form a helical membrane-spanning segment. An interaction with TOR1A region spans residues 356 to 583 (HTPVVETTAV…ENALKAGSCL (228 aa)). Positions 360 to 388 (VETTAVQEFQNQMKQLQSKYQSQDEKLWK) form a coiled coil. At 361–583 (ETTAVQEFQN…ENALKAGSCL (223 aa)) the chain is on the perinuclear space side. The N-linked (GlcNAc...) asparagine glycan is linked to N399.

It belongs to the TOR1AIP family. As to quaternary structure, interacts with ATP1B4. Interacts with TOR1A (ATP-bound). Interacts with TOR1B, TOR2A and TOR3A. Interacts with VIM.

It localises to the nucleus inner membrane. Required for nuclear membrane integrity. Induces TOR1A and TOR1B ATPase activity and is required for their location on the nuclear membrane. Binds to A- and B-type lamins. Possible role in membrane attachment and assembly of the nuclear lamina. The sequence is that of Torsin-1A-interacting protein 1 (Tor1aip1) from Rattus norvegicus (Rat).